A 311-amino-acid chain; its full sequence is Homeobox-leucine zipper protein ATHB-6 (311 aa).

Residues 1-10 (MMKRLSSSDS) show a composition bias toward polar residues. The disordered stretch occupies residues 1–32 (MMKRLSSSDSVGGLISLCPTTSTDEQSPRRYG). An interaction with ABI1 region spans residues 1–43 (MMKRLSSSDSVGGLISLCPTTSTDEQSPRRYGGREFQSMLEGY). The homeobox DNA-binding region spans 59 to 118 (LSEKKRRLSINQVKALEKNFELENKLEPERKVKLAQELGLQPRQVAVWFQNRRARWKTKQ). The tract at residues 119-154 (LEKDYGVLKTQYDSLRHNFDSLRRDNESLLQEISKL) is leucine-zipper. The segment at 157–183 (KLNGGGGEEEEEENNAAVTTESDISVK) is disordered. The interval 218–311 (LRDLLPLKAA…HWYSTVDHWN (94 aa)) is interaction with ABI1.

It belongs to the HD-ZIP homeobox family. Class I subfamily. In terms of assembly, interacts with ABI1. Phosphorylated by PKA. Reversible inactivation of the binding to DNA by phosphorylation. As to expression, widely expressed.

The protein resides in the nucleus. Transcription activator that may act as growth regulators in response to water deficit. Interacts with the core sequence 5'-CAATTATTA-3' of promoters in response to ABA and in an ABI1-dependent manner. Involved in the negative regulation of the ABA signaling pathway. This Arabidopsis thaliana (Mouse-ear cress) protein is Homeobox-leucine zipper protein ATHB-6 (ATHB-6).